A 373-amino-acid chain; its full sequence is Cytoplasmic tRNA 2-thiolation protein 1 (373 aa).

Belongs to the TtcA family. CTU1/NCS6/ATPBD3 subfamily.

Its subcellular location is the cytoplasm. Its pathway is tRNA modification; 5-methoxycarbonylmethyl-2-thiouridine-tRNA biosynthesis. Plays a central role in 2-thiolation of mcm(5)S(2)U at tRNA wobble positions of tRNA(Lys), tRNA(Glu) and tRNA(Gln). Directly binds tRNAs and probably acts by catalyzing adenylation of tRNAs, an intermediate required for 2-thiolation. It is unclear whether it acts as a sulfurtransferase that transfers sulfur from thiocarboxylated URM1 onto the uridine of tRNAs at wobble position. Prior mcm(5) tRNA modification by the elongator complex is required for 2-thiolation. May also be involved in protein urmylation. The sequence is that of Cytoplasmic tRNA 2-thiolation protein 1 from Eremothecium gossypii (strain ATCC 10895 / CBS 109.51 / FGSC 9923 / NRRL Y-1056) (Yeast).